A 219-amino-acid polypeptide reads, in one-letter code: Adenylate kinase (219 aa).

10–15 (GAGKGT) contacts ATP. The segment at 30-59 (ATGDLFRANISQGTDLGKQARAYMDAGQLV) is NMP. Residues threonine 31, arginine 36, 57 to 59 (QLV), 85 to 88 (GFPR), and glutamine 92 contribute to the AMP site. Positions 126–164 (GRRVCRNNSAHVFHLTYNPPKAEGVCDACGGELYQRDDD) are LID. ATP is bound by residues arginine 127 and 137–138 (VF). AMP-binding residues include arginine 161 and arginine 172. Position 200 (glycine 200) interacts with ATP.

Belongs to the adenylate kinase family. Monomer.

The protein resides in the cytoplasm. The enzyme catalyses AMP + ATP = 2 ADP. It functions in the pathway purine metabolism; AMP biosynthesis via salvage pathway; AMP from ADP: step 1/1. In terms of biological role, catalyzes the reversible transfer of the terminal phosphate group between ATP and AMP. Plays an important role in cellular energy homeostasis and in adenine nucleotide metabolism. The sequence is that of Adenylate kinase from Streptomyces griseus subsp. griseus (strain JCM 4626 / CBS 651.72 / NBRC 13350 / KCC S-0626 / ISP 5235).